Consider the following 353-residue polypeptide: GTPase Obg (353 aa).

The Obg domain maps to 1–159 (MKFLDEAKVY…RWIWLRLKLI (159 aa)). One can recognise an OBG-type G domain in the interval 160–327 (ADAGLVGLPN…VLRALVAVIG (168 aa)). Residues 166–173 (GLPNAGKS), 191–195 (FTTLH), 212–215 (DIPG), 279–282 (NKID), and 308–310 (SGV) contribute to the GTP site. Residues Ser-173 and Thr-193 each coordinate Mg(2+).

This sequence belongs to the TRAFAC class OBG-HflX-like GTPase superfamily. OBG GTPase family. As to quaternary structure, monomer. Requires Mg(2+) as cofactor.

Its subcellular location is the cytoplasm. An essential GTPase which binds GTP, GDP and possibly (p)ppGpp with moderate affinity, with high nucleotide exchange rates and a fairly low GTP hydrolysis rate. Plays a role in control of the cell cycle, stress response, ribosome biogenesis and in those bacteria that undergo differentiation, in morphogenesis control. This chain is GTPase Obg, found in Rhodopseudomonas palustris (strain TIE-1).